The primary structure comprises 274 residues: Rhamnulose-1-phosphate aldolase (274 aa).

Glutamate 117 is an active-site residue. The Zn(2+) site is built by histidine 141, histidine 143, and histidine 212.

It belongs to the aldolase class II family. RhaD subfamily. Homotetramer. Requires Zn(2+) as cofactor.

The protein localises to the cytoplasm. The catalysed reaction is L-rhamnulose 1-phosphate = (S)-lactaldehyde + dihydroxyacetone phosphate. Its pathway is carbohydrate degradation; L-rhamnose degradation; glycerone phosphate from L-rhamnose: step 3/3. Catalyzes the reversible cleavage of L-rhamnulose-1-phosphate to dihydroxyacetone phosphate (DHAP) and L-lactaldehyde. This chain is Rhamnulose-1-phosphate aldolase, found in Yersinia pseudotuberculosis serotype IB (strain PB1/+).